The following is a 319-amino-acid chain: Thioredoxin reductase 1 (319 aa).

Residues 11 to 14, 40 to 41, Gln-45, Asn-54, Val-87, Cys-145, Asp-288, and 295 to 297 each bind FAD; these read SGPA, IA, and RQA. Cysteines 142 and 145 form a disulfide. Ser-303 bears the Phosphoserine mark.

It belongs to the class-II pyridine nucleotide-disulfide oxidoreductase family. Homodimer. Requires FAD as cofactor.

Its subcellular location is the cytoplasm. The protein resides in the mitochondrion intermembrane space. It catalyses the reaction [thioredoxin]-dithiol + NADP(+) = [thioredoxin]-disulfide + NADPH + H(+). In terms of biological role, central component in the thioredoxin system. Reduces thioredoxins 1 and 2. The sequence is that of Thioredoxin reductase 1 (TRR1) from Saccharomyces cerevisiae (strain ATCC 204508 / S288c) (Baker's yeast).